Here is a 357-residue protein sequence, read N- to C-terminus: GDP-mannose transporter 2 (357 aa).

Topologically, residues 1 to 33 (MASARNGVSKDELLPVYERRSQRDGDISGSVKS) are cytoplasmic. The helical transmembrane segment at 34-54 (FASTIGNSASAAVLAYCLSSI) threads the bilayer. Topologically, residues 55-68 (SMTLVNKYVVSGAS) are lumenal. The chain crosses the membrane as a helical span at residues 69–89 (WNLSFLYLAMQSFIGTVAILA). Residues 90-107 (CKKTGLIQNLALFDLKKA) are Cytoplasmic-facing. The helical transmembrane segment at 108-128 (QTWLPISLLLVGMIYTGNKAL) threads the bilayer. Gln129 is a topological domain (lumenal). A helical transmembrane segment spans residues 130–150 (FLSVPVYTIFKNLTIIVIAYG). Topologically, residues 151–161 (EVLMVGGGVKP) are cytoplasmic. The helical transmembrane segment at 162–181 (LALLSFGLMVLSSVVAAWAD) threads the bilayer. The Lumenal segment spans residues 182–196 (IQNATTATVGASSDS). N-linked (GlcNAc...) asparagine glycosylation is present at Asn184. Residues 197–217 (TAAALSALNAGYAWMGTNVIF) form a helical membrane-spanning segment. Topologically, residues 218-236 (SASYALGMRRVIKKTNFDN) are cytoplasmic. A helical membrane pass occupies residues 237–257 (WDVMFYNNLLSIPILLLASVL). At 258-277 (AEDWSSENLQRNFPAELRQS) the chain is on the lumenal side. Residues 278–298 (LFIGILYSGVAAVFISYCTAW) traverse the membrane as a helical segment. Residues 299 to 306 (CVRATSST) lie on the Cytoplasmic side of the membrane. A helical membrane pass occupies residues 307–327 (TYAMVGALNKLPLAVAGIVFF). At 328–332 (AAPVT) the chain is on the lumenal side. A helical membrane pass occupies residues 333–352 (FGSVSAIVLGFISGLVYARA). At 353 to 357 (KSTGA) the chain is on the cytoplasmic side.

It belongs to the TPT transporter family. SLC35D subfamily. Homooligomer.

The protein localises to the golgi apparatus membrane. Its subcellular location is the cytoplasmic vesicle membrane. The protein resides in the endoplasmic reticulum membrane. Its function is as follows. Involved in the import of GDP-mannose from the cytoplasm into the Golgi lumen. The sequence is that of GDP-mannose transporter 2 (gmt2) from Neosartorya fischeri (strain ATCC 1020 / DSM 3700 / CBS 544.65 / FGSC A1164 / JCM 1740 / NRRL 181 / WB 181) (Aspergillus fischerianus).